The sequence spans 544 residues: Epidermal growth factor-like protein 6 (544 aa).

Residues 1–30 (MAITGGMQSSDMVLLLWITVICACCSFVDS) form the signal peptide. The EGF-like 1 domain maps to 63-98 (RKGQCEAVCEQGCKHGECVGPNKCKCFPGFTGKNCN). Cystine bridges form between cysteine 67/cysteine 80, cysteine 71/cysteine 86, cysteine 88/cysteine 97, cysteine 104/cysteine 115, cysteine 111/cysteine 124, and cysteine 126/cysteine 138. The EGF-like 2; calcium-binding domain occupies 100–139 (DLNECGLKPRPCEHRCMNTHGSYKCYCLNGYMLMPDGSCS). One can recognise an EGF-like 3 domain in the interval 144–178 (CAMANCQYGCEQVKGDIRCLCPSGGLQLGPDGRTC). Residues 180–218 (DIDECAVGKASCPINRRCVNTFGSYYCKCQIGYELKYVN) enclose the EGF-like 4; calcium-binding domain. 5 disulfides stabilise this stretch: cysteine 184/cysteine 197, cysteine 191/cysteine 206, cysteine 229/cysteine 242, cysteine 236/cysteine 251, and cysteine 253/cysteine 264. The EGF-like 5; calcium-binding domain occupies 225 to 265 (DINECLLNTHKCSINADCLNTQGSFKCRCKHGFKGNGQECS). The disordered stretch occupies residues 332–357 (GNDNDEEEGEIEEEEEEELDEEDEEN). The stretch at 333 to 367 (NDNDEEEGEIEEEEEEELDEEDEENVIEEEKLLRG) forms a coiled coil. A compositionally biased stretch (acidic residues) spans 334-357 (DNDEEEGEIEEEEEEELDEEDEEN). One can recognise an MAM domain in the interval 399 to 543 (VDCRFDQGTC…VFLSSGPCSD (145 aa)).

It belongs to the nephronectin family.

It localises to the secreted. The protein localises to the extracellular space. Its subcellular location is the extracellular matrix. It is found in the basement membrane. May play a role in organ morphogenesis. Promotes matrix assembly. In Xenopus laevis (African clawed frog), this protein is Epidermal growth factor-like protein 6 (egfl6).